The primary structure comprises 341 residues: ATPase GET3 (341 aa).

34–41 (KGGVGKTT) contributes to the ATP binding site. Residue Asp-63 is part of the active site. The ATP site is built by Glu-245 and Asn-272. The Zn(2+) site is built by Cys-283 and Cys-286.

Belongs to the arsA ATPase family. As to quaternary structure, homodimer.

Its subcellular location is the cytoplasm. It localises to the endoplasmic reticulum. Its function is as follows. ATPase required for the post-translational delivery of tail-anchored (TA) proteins to the endoplasmic reticulum. Recognizes and selectively binds the transmembrane domain of TA proteins in the cytosol. This complex then targets to the endoplasmic reticulum by membrane-bound receptors, where the tail-anchored protein is released for insertion. This process is regulated by ATP binding and hydrolysis. ATP binding drives the homodimer towards the closed dimer state, facilitating recognition of newly synthesized TA membrane proteins. ATP hydrolysis is required for insertion. Subsequently, the homodimer reverts towards the open dimer state, lowering its affinity for the membrane-bound receptor, and returning it to the cytosol to initiate a new round of targeting. The chain is ATPase GET3 from Ajellomyces dermatitidis (strain ER-3 / ATCC MYA-2586) (Blastomyces dermatitidis).